Here is a 157-residue protein sequence, read N- to C-terminus: Methylglyoxal synthase (157 aa).

The MGS-like domain maps to 1-157; sequence MSKVKNIAVV…DFSSYTQRKL (157 aa). Substrate-binding positions include H12, K16, 38-41, and 71-72; these read TGTT and SG. The active-site Proton donor/acceptor is the D77. Position 104 (H104) interacts with substrate.

It belongs to the methylglyoxal synthase family.

It carries out the reaction dihydroxyacetone phosphate = methylglyoxal + phosphate. Functionally, catalyzes the formation of methylglyoxal from dihydroxyacetone phosphate. The sequence is that of Methylglyoxal synthase from Maridesulfovibrio salexigens (strain ATCC 14822 / DSM 2638 / NCIMB 8403 / VKM B-1763) (Desulfovibrio salexigens).